A 129-amino-acid chain; its full sequence is Histone H3 (129 aa).

The segment at 1–36 (MSRTKETARAKRTITSKKSKKAPSGASGVKRSHRRW) is disordered. Residues 10-21 (AKRTITSKKSKK) are compositionally biased toward basic residues.

The protein belongs to the histone H3 family. The nucleosome is a histone octamer containing two molecules each of H2A, H2B, H3 and H4 assembled in one H3-H4 heterotetramer and two H2A-H2B heterodimers. The octamer wraps approximately 147 bp of DNA.

The protein resides in the nucleus. It localises to the chromosome. Functionally, core component of nucleosome. Nucleosomes wrap and compact DNA into chromatin, limiting DNA accessibility to the cellular machineries which require DNA as a template. Histones thereby play a central role in transcription regulation, DNA repair, DNA replication and chromosomal stability. DNA accessibility is regulated via a complex set of post-translational modifications of histones, also called histone code, and nucleosome remodeling. This is Histone H3 from Leishmania infantum.